We begin with the raw amino-acid sequence, 210 residues long: Protein-L-isoaspartate O-methyltransferase (210 aa).

Ser60 is an active-site residue.

The protein belongs to the methyltransferase superfamily. L-isoaspartyl/D-aspartyl protein methyltransferase family.

The protein resides in the cytoplasm. The enzyme catalyses [protein]-L-isoaspartate + S-adenosyl-L-methionine = [protein]-L-isoaspartate alpha-methyl ester + S-adenosyl-L-homocysteine. In terms of biological role, catalyzes the methyl esterification of L-isoaspartyl residues in peptides and proteins that result from spontaneous decomposition of normal L-aspartyl and L-asparaginyl residues. It plays a role in the repair and/or degradation of damaged proteins. The protein is Protein-L-isoaspartate O-methyltransferase of Xylella fastidiosa (strain M12).